Consider the following 369-residue polypeptide: Anhydro-N-acetylmuramic acid kinase (369 aa).

12-19 serves as a coordination point for ATP; it reads GTSMDGVD.

This sequence belongs to the anhydro-N-acetylmuramic acid kinase family.

It catalyses the reaction 1,6-anhydro-N-acetyl-beta-muramate + ATP + H2O = N-acetyl-D-muramate 6-phosphate + ADP + H(+). It participates in amino-sugar metabolism; 1,6-anhydro-N-acetylmuramate degradation. The protein operates within cell wall biogenesis; peptidoglycan recycling. Functionally, catalyzes the specific phosphorylation of 1,6-anhydro-N-acetylmuramic acid (anhMurNAc) with the simultaneous cleavage of the 1,6-anhydro ring, generating MurNAc-6-P. Is required for the utilization of anhMurNAc either imported from the medium or derived from its own cell wall murein, and thus plays a role in cell wall recycling. The protein is Anhydro-N-acetylmuramic acid kinase of Shewanella pealeana (strain ATCC 700345 / ANG-SQ1).